We begin with the raw amino-acid sequence, 564 residues long: Putative ABC transporter ATP-binding protein PBPRA2240 (564 aa).

ABC transporter domains are found at residues 3 to 244 (IEFS…GIRE) and 299 to 533 (LTVN…ANLT). Residues 37–44 (GPSGSGKS) and 332–339 (GKNGSGKS) contribute to the ATP site.

It belongs to the ABC transporter superfamily.

The protein resides in the cell inner membrane. In terms of biological role, probably part of an ABC transporter complex. Responsible for energy coupling to the transport system. The sequence is that of Putative ABC transporter ATP-binding protein PBPRA2240 from Photobacterium profundum (strain SS9).